A 334-amino-acid polypeptide reads, in one-letter code: MGRRSSDTEEESRSKRKKKHRRRSSSSSSSDSRTYSRKKGGRRPRSESRSWSRDRQPRSHSYERRRRRRSSSSSSYGSRRKRSRSRSRGRGKSYRVQRSRSKSRTRRSRSRPRPRSHSRSSERSSHRRTRSRSRDRDRRKVRDKEKREKEKDKGKDKEAHTIKRGDCGNIKAGLEHLPPAEQAKARLQLVLEAAAKADEALKAKERNEEEAKRRKEEDQATLGEQVKRVKEIEAIESDSFVQQTFRSSKDVKKSVEPSEVKHVTPASGPASVAADPPSTGKEIDPDSIPTAIKYQDDNSLAHPNLFIEKAEAEEKWFKRLIALRQERLMGSPVA.

The segment covering 1-13 (MGRRSSDTEEESR) has biased composition (basic and acidic residues). Disordered stretches follow at residues 1-173 (MGRR…IKAG), 201-222 (LKAK…QATL), and 241-290 (VQQT…SIPT). Residues 14-24 (SKRKKKHRRRS) show a composition bias toward basic residues. The segment covering 44–62 (PRSESRSWSRDRQPRSHSY) has biased composition (basic and acidic residues). Residues 78-118 (SRRKRSRSRSRGRGKSYRVQRSRSKSRTRRSRSRPRPRSHS) are compositionally biased toward basic residues. Basic and acidic residues-rich tracts occupy residues 132-166 (RSRD…KRGD), 201-218 (LKAK…KEED), and 247-262 (SSKD…EVKH). Positions 180–234 (AEQAKARLQLVLEAAAKADEALKAKERNEEEAKRRKEEDQATLGEQVKRVKEIEA) form a coiled coil.

In terms of assembly, interacts (via Arg/Ser-rich domain) with LUC7L3, RBM39 and RSF1. Post-translationally, phosphorylated.

The protein resides in the nucleus speckle. Its subcellular location is the nucleus. It localises to the cytoplasm. Functionally, plays a role in pre-mRNA splicing. Involved in both constitutive and alternative pre-mRNA splicing. May have a role in the recognition of the 3' splice site during the second step of splicing. The chain is Serine/Arginine-related protein 53 (Rsrc1) from Rattus norvegicus (Rat).